The chain runs to 123 residues: Small ribosomal subunit protein uS12c (123 aa).

Positions 9–31 are disordered; sequence RNKRQAAENKTKSPALQRSPQRR.

Belongs to the universal ribosomal protein uS12 family. Part of the 30S ribosomal subunit.

The protein resides in the plastid. It localises to the chloroplast. In terms of biological role, with S4 and S5 plays an important role in translational accuracy. Located at the interface of the 30S and 50S subunits. The chain is Small ribosomal subunit protein uS12c (rps12) from Spirogyra maxima (Green alga).